Reading from the N-terminus, the 254-residue chain is Imidazole glycerol phosphate synthase subunit HisF (254 aa).

Catalysis depends on residues Asp-12 and Asp-131.

Belongs to the HisA/HisF family. As to quaternary structure, heterodimer of HisH and HisF.

Its subcellular location is the cytoplasm. The enzyme catalyses 5-[(5-phospho-1-deoxy-D-ribulos-1-ylimino)methylamino]-1-(5-phospho-beta-D-ribosyl)imidazole-4-carboxamide + L-glutamine = D-erythro-1-(imidazol-4-yl)glycerol 3-phosphate + 5-amino-1-(5-phospho-beta-D-ribosyl)imidazole-4-carboxamide + L-glutamate + H(+). It functions in the pathway amino-acid biosynthesis; L-histidine biosynthesis; L-histidine from 5-phospho-alpha-D-ribose 1-diphosphate: step 5/9. IGPS catalyzes the conversion of PRFAR and glutamine to IGP, AICAR and glutamate. The HisF subunit catalyzes the cyclization activity that produces IGP and AICAR from PRFAR using the ammonia provided by the HisH subunit. The sequence is that of Imidazole glycerol phosphate synthase subunit HisF from Herminiimonas arsenicoxydans.